The chain runs to 673 residues: MGYQHNRSFNKATGAGFIIAMGIVYGDIGTSPLYTMESIVQGQGGLERISETSIIGALSLIIWTLTLITTVKYVWIALKADNNHEGGVFSLFTLVRKYAKWLIIPAMIGGAALLSDGALTPAVTVTSAIEGLRSIPAFHEAFGQQQLPIVIITLAILAILFLIQRFGTSIVGKVFGPVMFIWFSFLGITGLINLFGDFSVLQAINPYWAIHLLLSPENKAGIFVLGSVFLATTGAEALYSDLGHVGRGNIHVSWPFVKVCIILSYCGQAAWLLQNRGKSLGDINPFFAVLPQSLIIFSVVLATLAAIIASQALISGSFTLVSEAIRLKLLPRLKINYPGETFGQLYIPAVNLGLWLAASFIVVYFQSSAHMEAAYGLAITVTMLMTTILLTVYLAQHQKVKKVFVVLFFGAFIFIEGLFFAASAVKFLHGGYVVVILAALILFVMAIWHKSDQLFYKYLKSSNLNDYKEQMNKLRKDESYDLYHTNVVYLTAKMDKEWIDRSILYSILDKRPKKAEVYWFVKVNVTDEPYTSEYEVDMLGTDFIVCVNLYLGFHMRQEIPRYLRTIVTNLMESGRLPQQHQPYSIIPGRKVGDFRFILLEEKLINARQMPAFERFVLQTKEQIKKITASPARWFGLHFSEVTVETVPLVLSDVRNLEIHERISKENEVENLSK.

13 helical membrane-spanning segments follow: residues 14 to 34, 58 to 78, 101 to 121, 147 to 167, 175 to 195, 196 to 216, 220 to 240, 252 to 272, 294 to 314, 345 to 365, 374 to 394, 403 to 423, and 427 to 447; these read GAGF…SPLY, LSLI…WIAL, WLII…ALTP, LPIV…QRFG, FGPV…INLF, GDFS…LLSP, AGIF…ALYS, VSWP…AAWL, LIIF…QALI, LYIP…VVYF, AYGL…TVYL, VFVV…FAAS, and FLHG…VMAI.

The protein belongs to the HAK/KUP transporter (TC 2.A.72) family.

It localises to the cell membrane. It catalyses the reaction K(+)(in) + H(+)(in) = K(+)(out) + H(+)(out). In terms of biological role, transport of potassium into the cell. Likely operates as a K(+):H(+) symporter. The sequence is that of Putative potassium transport system protein Kup 1 from Lactococcus lactis subsp. cremoris (strain MG1363).